Reading from the N-terminus, the 371-residue chain is Glutamate 5-kinase 2 (371 aa).

Lys-13 contributes to the ATP binding site. Substrate is bound by residues Ser-53, Asp-140, and Asn-152. Residues 172–173 and 214–220 contribute to the ATP site; these read SD and TGGMRSK. The PUA domain occupies 280 to 356; sequence EGEMILSDDC…KELTNRALID (77 aa).

The protein belongs to the glutamate 5-kinase family.

The protein localises to the cytoplasm. It catalyses the reaction L-glutamate + ATP = L-glutamyl 5-phosphate + ADP. The protein operates within amino-acid biosynthesis; L-proline biosynthesis; L-glutamate 5-semialdehyde from L-glutamate: step 1/2. Its function is as follows. Catalyzes the transfer of a phosphate group to glutamate to form L-glutamate 5-phosphate. This chain is Glutamate 5-kinase 2 (proJ), found in Bacillus subtilis (strain 168).